Reading from the N-terminus, the 431-residue chain is Glucose-1-phosphate adenylyltransferase (431 aa).

Lys-39 contacts beta-D-fructose 1,6-bisphosphate. Residues Arg-40, His-46, and Arg-52 each contribute to the AMP site. Tyr-114 is an alpha-D-glucose 1-phosphate binding site. Position 130 (Arg-130) interacts with AMP. Alpha-D-glucose 1-phosphate is bound by residues Gly-179, 194-195 (EK), and Ser-212. AMP contacts are provided by Glu-370 and Arg-386. Beta-D-fructose 1,6-bisphosphate contacts are provided by residues 419 to 423 (REMLR) and 429 to 431 (QER).

This sequence belongs to the bacterial/plant glucose-1-phosphate adenylyltransferase family. As to quaternary structure, homotetramer.

It catalyses the reaction alpha-D-glucose 1-phosphate + ATP + H(+) = ADP-alpha-D-glucose + diphosphate. Its pathway is glycan biosynthesis; glycogen biosynthesis. Allosterically activated by fructose-1,6-bisphosphate (F16BP) and inhibited by AMP. Involved in the biosynthesis of ADP-glucose, a building block required for the elongation reactions to produce glycogen. Catalyzes the reaction between ATP and alpha-D-glucose 1-phosphate (G1P) to produce pyrophosphate and ADP-Glc. The chain is Glucose-1-phosphate adenylyltransferase from Shigella boydii serotype 18 (strain CDC 3083-94 / BS512).